We begin with the raw amino-acid sequence, 357 residues long: DNA replication and repair protein RecF (357 aa).

30–37 is a binding site for ATP; sequence GANGSGKT.

This sequence belongs to the RecF family.

It localises to the cytoplasm. The RecF protein is involved in DNA metabolism; it is required for DNA replication and normal SOS inducibility. RecF binds preferentially to single-stranded, linear DNA. It also seems to bind ATP. In Escherichia coli O139:H28 (strain E24377A / ETEC), this protein is DNA replication and repair protein RecF.